A 185-amino-acid polypeptide reads, in one-letter code: Ribosome-recycling factor (185 aa).

Residues 138-185 (ALKKQEKDGEITEDEERRLEKEVQKVTDESTKKIDQMADNKRKEIIQG) form a disordered region.

It belongs to the RRF family.

It is found in the cytoplasm. Functionally, responsible for the release of ribosomes from messenger RNA at the termination of protein biosynthesis. May increase the efficiency of translation by recycling ribosomes from one round of translation to another. In Lactobacillus delbrueckii subsp. bulgaricus (strain ATCC 11842 / DSM 20081 / BCRC 10696 / JCM 1002 / NBRC 13953 / NCIMB 11778 / NCTC 12712 / WDCM 00102 / Lb 14), this protein is Ribosome-recycling factor.